The primary structure comprises 339 residues: NADH-quinone oxidoreductase subunit H (339 aa).

Helical transmembrane passes span 9-29 (IFPL…LILC), 50-70 (PNVV…KLLF), 82-102 (ILFI…WAVI), 115-135 (VGVL…IIAG), 161-181 (MGLV…SEII), 187-207 (MPWW…ISVL), 235-255 (MGFA…SAMT), 275-295 (IPGF…FLWI), and 311-331 (GWKV…SVLV).

It belongs to the complex I subunit 1 family. As to quaternary structure, NDH-1 is composed of 14 different subunits. Subunits NuoA, H, J, K, L, M, N constitute the membrane sector of the complex.

Its subcellular location is the cell membrane. The catalysed reaction is a quinone + NADH + 5 H(+)(in) = a quinol + NAD(+) + 4 H(+)(out). Its function is as follows. NDH-1 shuttles electrons from NADH, via FMN and iron-sulfur (Fe-S) centers, to quinones in the respiratory chain. The immediate electron acceptor for the enzyme in this species is believed to be ubiquinone. Couples the redox reaction to proton translocation (for every two electrons transferred, four hydrogen ions are translocated across the cytoplasmic membrane), and thus conserves the redox energy in a proton gradient. This subunit may bind ubiquinone. This Rickettsia africae (strain ESF-5) protein is NADH-quinone oxidoreductase subunit H.